The sequence spans 235 residues: Ribonuclease 3 (235 aa).

An RNase III domain is found at 7-134 (LKDLQNKIEI…LIASIYLDKG (128 aa)). Glutamate 47 is a Mg(2+) binding site. Aspartate 51 is an active-site residue. Residues aspartate 120 and glutamate 123 each coordinate Mg(2+). Residue glutamate 123 is part of the active site. The DRBM domain maps to 161-230 (DYKTKLQEII…AKKAIENMEV (70 aa)).

The protein belongs to the ribonuclease III family. As to quaternary structure, homodimer. Mg(2+) serves as cofactor.

It localises to the cytoplasm. The catalysed reaction is Endonucleolytic cleavage to 5'-phosphomonoester.. Functionally, digests double-stranded RNA. Involved in the processing of primary rRNA transcript to yield the immediate precursors to the large and small rRNAs (23S and 16S). Processes some mRNAs, and tRNAs when they are encoded in the rRNA operon. Processes pre-crRNA and tracrRNA of type II CRISPR loci if present in the organism. The protein is Ribonuclease 3 of Clostridium tetani (strain Massachusetts / E88).